Here is a 612-residue protein sequence, read N- to C-terminus: Pentatricopeptide repeat-containing protein At4g14050, mitochondrial (612 aa).

Residues 1-24 constitute a mitochondrion transit peptide; the sequence is MLIPHYLHQLQLCARNRTLTTAKA. 11 PPR repeats span residues 37-71, 72-103, 104-138, 139-169, 170-204, 205-235, 237-271, 272-302, 303-337, 338-373, and 374-408; these read CCPLANTLVNVYGKCGAASHALQVFDEMPHRDHIA, WASVLTALNQANLSGKTLSVFSSVGSSSGLRP, DDFVFSALVKACANLGSIDHGRQVHCHFIVSEYAN, DEVVKSSLVDMYAKCGLLNSAKAVFDSIRVK, NTISWTAMVSGYAKSGRKEEALELFRILPVKNLYS, WTALISGFVQSGKGLEAFSVFTEMRRERVDI, DPLVLSSIVGACANLAASIAGRQVHGLVIALGFDS, CVFISNALIDMYAKCSDVIAAKDIFSRMRHR, DVVSWTSLIVGMAQHGQAEKALALYDDMVSHGVKP, NEVTFVGLIYACSHVGFVEKGRELFQSMTKDYGIRP, and SLQHYTCLLDLLGRSGLLDEAENLIHTMPFPPDEP. Residues 409–485 form a type E motif region; the sequence is TWAALLSACK…DPGHSSVEVR (77 aa). Residues 486 to 516 form a type E(+) motif region; the sequence is KETEVFYAGETSHPLKEDIFRLLKKLEEEMR. The segment at 518–612 is type DYW motif; that stretch reads RNGYVPDTSW…GGKCSCNDFW (95 aa).

This sequence belongs to the PPR family. PCMP-H subfamily. As to quaternary structure, interacts with MORF8/RIP1 and MORF1/RIP8.

It is found in the mitochondrion. Its function is as follows. Involved in C-to-U editing of mitochondrial RNA. Required specifically for editing the mitochondrial NAD4, MT-CYB/COB and RPL16 transcripts. The sequence is that of Pentatricopeptide repeat-containing protein At4g14050, mitochondrial (PCMP-H13) from Arabidopsis thaliana (Mouse-ear cress).